The sequence spans 137 residues: Histone H2B.3 (137 aa).

Residues 1–37 (KPAEKKPAEKTPVAEKAPAEKKPKAGKKLPKDAAAGD) are compositionally biased toward basic and acidic residues. Positions 1 to 45 (KPAEKKPAEKTPVAEKAPAEKKPKAGKKLPKDAAAGDKKKKRSKK) are disordered. Residues K27 and K28 each carry the N6-acetyllysine modification. A Glycyl lysine isopeptide (Lys-Gly) (interchain with G-Cter in ubiquitin) cross-link involves residue K133.

This sequence belongs to the histone H2B family. In terms of assembly, the nucleosome is a histone octamer containing two molecules each of H2A, H2B, H3 and H4 assembled in one H3-H4 heterotetramer and two H2A-H2B heterodimers. The octamer wraps approximately 147 bp of DNA. In terms of processing, can be acetylated to formH2BK33ac and H2BK34ac. Post-translationally, monoubiquitinated to form H2BK143ub1; may give a specific tag for epigenetic transcriptional activation. Ubiquitous. Highest level in shoots, fruits and young flower buds, including petals, anthers and ovules.

Its subcellular location is the nucleus. It is found in the chromosome. Functionally, core component of nucleosome. Nucleosomes wrap and compact DNA into chromatin, limiting DNA accessibility to the cellular machineries which require DNA as a template. Histones thereby play a central role in transcription regulation, DNA repair, DNA replication and chromosomal stability. DNA accessibility is regulated via a complex set of post-translational modifications of histones, also called histone code, and nucleosome remodeling. In Solanum lycopersicum (Tomato), this protein is Histone H2B.3 (H2B-3).